Here is a 489-residue protein sequence, read N- to C-terminus: Pluviatolide synthase (489 aa).

The helical transmembrane segment at 6-26 (SVLGLSSTLIIALAITVIFLL) threads the bilayer. Residue C432 coordinates heme.

This sequence belongs to the cytochrome P450 family. Heme is required as a cofactor.

It is found in the membrane. It carries out the reaction (-)-matairesinol + reduced [NADPH--hemoprotein reductase] + O2 = (-)-pluviatolide + oxidized [NADPH--hemoprotein reductase] + 2 H2O + H(+). It participates in aromatic compound metabolism; phenylpropanoid biosynthesis. In terms of biological role, cytochrome P450 involved in the biosynthesis of etoposide, a chemotherapeutic compound of the topoisomerase inhibitor family. Catalyzes the conversion of matairesinol to pluviatolide. In Podophyllum peltatum (American mandrake), this protein is Pluviatolide synthase.